The following is an 883-amino-acid chain: AP-5 complex subunit beta-1 (883 aa).

As to quaternary structure, probably part of the adaptor protein complex 5 (AP-5).

As part of AP-5, a probable fifth adaptor protein complex, it may be involved in endosomal transport. This Xenopus tropicalis (Western clawed frog) protein is AP-5 complex subunit beta-1 (ap5b1).